Reading from the N-terminus, the 155-residue chain is MAIEKTDNLLTVFKDLLSQERFGSQSEIVSALQDLGFSNINQSKVSRMLTKFGAIRTRNTRMEMVYCLPNELSVPNTSSPLKNLVLDIDHNDFLIVIKTSPGAAQLIARLLDSVGKTEGILGTIAGDDTIFITPTKGTGIKELINTIQQLFENSL.

The protein belongs to the ArgR family.

It localises to the cytoplasm. It participates in amino-acid biosynthesis; L-arginine biosynthesis [regulation]. Its function is as follows. Regulates arginine biosynthesis genes. In Mannheimia succiniciproducens (strain KCTC 0769BP / MBEL55E), this protein is Arginine repressor.